The sequence spans 622 residues: Chaperone protein HscA homolog (622 aa).

It belongs to the heat shock protein 70 family.

Chaperone involved in the maturation of iron-sulfur cluster-containing proteins. Has a low intrinsic ATPase activity which is markedly stimulated by HscB. This chain is Chaperone protein HscA homolog, found in Burkholderia pseudomallei (strain 1710b).